Here is a 199-residue protein sequence, read N- to C-terminus: Protein-L-isoaspartate O-methyltransferase (199 aa).

The active site involves serine 51.

The protein belongs to the methyltransferase superfamily. L-isoaspartyl/D-aspartyl protein methyltransferase family.

Its subcellular location is the cytoplasm. The catalysed reaction is [protein]-L-isoaspartate + S-adenosyl-L-methionine = [protein]-L-isoaspartate alpha-methyl ester + S-adenosyl-L-homocysteine. Catalyzes the methyl esterification of L-isoaspartyl residues in peptides and proteins that result from spontaneous decomposition of normal L-aspartyl and L-asparaginyl residues. It plays a role in the repair and/or degradation of damaged proteins. This is Protein-L-isoaspartate O-methyltransferase from Fervidobacterium nodosum (strain ATCC 35602 / DSM 5306 / Rt17-B1).